The primary structure comprises 603 residues: Insulin-like growth factor-binding protein complex acid labile subunit (603 aa).

Positions 1-23 are cleaved as a signal peptide; sequence MALRTGSPALVVLLAFWVALGPC. In terms of domain architecture, LRRNT spans 32–74; it reads ASADAEGPQCPVTCTCSYDDYTDELSVFCSSRNLTQLPDGIPV. 2 disulfides stabilise this stretch: Cys-41–Cys-47 and Cys-45–Cys-60. Asn-64, Asn-85, and Asn-96 each carry an N-linked (GlcNAc...) asparagine glycan. LRR repeat units lie at residues 75 to 96, 99 to 120, 123 to 144, 147 to 168, 171 to 192, 195 to 216, 219 to 240, 243 to 264, 267 to 288, 291 to 312, 315 to 336, 339 to 360, 363 to 384, 387 to 408, 411 to 432, 435 to 456, 459 to 480, 483 to 504, and 507 to 528; these read STRA…AFQN, SLDF…ALLG, NLYH…LFRH, SLAS…LFRG, HLWD…VFQG, NLHE…LLCG, ELRE…VFIH, RLQK…AFLG, ALRW…TFPG, GLHV…TFKD, FLEE…TFEG, QLEV…AFFG, NVAV…VFQG, RLHS…TFAG, GLRR…SLAG, ELLE…LFQG, QLEY…VLGP, RAFW…LFSS, and RLRY…PGLE. The N-linked (GlcNAc...) asparagine glycan is linked to Asn-368. N-linked (GlcNAc...) asparagine glycosylation occurs at Asn-515. The LRRCT domain occupies 535-603; that stretch reads NPWDCSCPLK…DISETLFVHC (69 aa). 3 cysteine pairs are disulfide-bonded: Cys-539-Cys-581, Cys-541-Cys-603, and Cys-565-Cys-570. N-linked (GlcNAc...) asparagine glycosylation is found at Asn-578 and Asn-586.

As to quaternary structure, forms a ternary complex with IGF1 and IGFBP3.

Its subcellular location is the secreted. It is found in the extracellular space. In terms of biological role, may have an important role in regulating the access of circulating IGFs to the tissues. This Mus musculus (Mouse) protein is Insulin-like growth factor-binding protein complex acid labile subunit (Igfals).